A 218-amino-acid chain; its full sequence is UPF0502 protein CJA_1529 (218 aa).

This sequence belongs to the UPF0502 family.

In Cellvibrio japonicus (strain Ueda107) (Pseudomonas fluorescens subsp. cellulosa), this protein is UPF0502 protein CJA_1529.